Consider the following 333-residue polypeptide: Glyceraldehyde-3-phosphate dehydrogenase (333 aa).

Ser1 carries the N-acetylserine modification. NAD(+)-binding positions include 10–11 (RI), Asp31, and Ser118. Residues 147 to 149 (SCT), Thr178, 207 to 208 (TG), and Arg230 each bind D-glyceraldehyde 3-phosphate. Residue Cys148 is the Nucleophile of the active site. An NAD(+)-binding site is contributed by Asn312.

Belongs to the glyceraldehyde-3-phosphate dehydrogenase family. In terms of assembly, homotetramer.

It localises to the cytoplasm. The enzyme catalyses D-glyceraldehyde 3-phosphate + phosphate + NAD(+) = (2R)-3-phospho-glyceroyl phosphate + NADH + H(+). It functions in the pathway carbohydrate degradation; glycolysis; pyruvate from D-glyceraldehyde 3-phosphate: step 1/5. The polypeptide is Glyceraldehyde-3-phosphate dehydrogenase (Homarus americanus (American lobster)).